An 886-amino-acid polypeptide reads, in one-letter code: Alanine--tRNA ligase (886 aa).

Residues His564, His568, Cys666, and His670 each contribute to the Zn(2+) site.

Belongs to the class-II aminoacyl-tRNA synthetase family. The cofactor is Zn(2+).

The protein localises to the cytoplasm. The catalysed reaction is tRNA(Ala) + L-alanine + ATP = L-alanyl-tRNA(Ala) + AMP + diphosphate. In terms of biological role, catalyzes the attachment of alanine to tRNA(Ala) in a two-step reaction: alanine is first activated by ATP to form Ala-AMP and then transferred to the acceptor end of tRNA(Ala). Also edits incorrectly charged Ser-tRNA(Ala) and Gly-tRNA(Ala) via its editing domain. The sequence is that of Alanine--tRNA ligase from Prochlorococcus marinus (strain MIT 9515).